Reading from the N-terminus, the 65-residue chain is uncharacterized protein (65 aa).

The segment at residues 1–65 is a DNA-binding region (ompR/PhoB-type); sequence MIALSVCWQI…ETGIGYRFML (65 aa).

This is an uncharacterized protein from Escherichia coli (strain K12).